A 331-amino-acid chain; its full sequence is uncharacterized protein (331 aa).

Belongs to the IIV-6 335L family.

This is an uncharacterized protein from Invertebrate iridescent virus 6 (IIV-6).